Here is a 365-residue protein sequence, read N- to C-terminus: Ribosomal RNA large subunit methyltransferase F (365 aa).

The tract at residues 1-50 is disordered; the sequence is MSKPAVKSVPSATAKTATRAANPRQKAKAPKQAKPEGKGRAKPSKDKPRA. Residues 33–50 show a composition bias toward basic and acidic residues; the sequence is AKPEGKGRAKPSKDKPRA.

This sequence belongs to the methyltransferase superfamily. METTL16/RlmF family.

It is found in the cytoplasm. It catalyses the reaction adenosine(1618) in 23S rRNA + S-adenosyl-L-methionine = N(6)-methyladenosine(1618) in 23S rRNA + S-adenosyl-L-homocysteine + H(+). Functionally, specifically methylates the adenine in position 1618 of 23S rRNA. The sequence is that of Ribosomal RNA large subunit methyltransferase F from Shewanella baltica (strain OS195).